Consider the following 145-residue polypeptide: D-aminoacyl-tRNA deacylase (145 aa).

Positions 137–138 (GP) match the Gly-cisPro motif, important for rejection of L-amino acids motif.

It belongs to the DTD family. In terms of assembly, homodimer.

The protein resides in the cytoplasm. It catalyses the reaction glycyl-tRNA(Ala) + H2O = tRNA(Ala) + glycine + H(+). The enzyme catalyses a D-aminoacyl-tRNA + H2O = a tRNA + a D-alpha-amino acid + H(+). An aminoacyl-tRNA editing enzyme that deacylates mischarged D-aminoacyl-tRNAs. Also deacylates mischarged glycyl-tRNA(Ala), protecting cells against glycine mischarging by AlaRS. Acts via tRNA-based rather than protein-based catalysis; rejects L-amino acids rather than detecting D-amino acids in the active site. By recycling D-aminoacyl-tRNA to D-amino acids and free tRNA molecules, this enzyme counteracts the toxicity associated with the formation of D-aminoacyl-tRNA entities in vivo and helps enforce protein L-homochirality. This is D-aminoacyl-tRNA deacylase from Pseudomonas fluorescens (strain Pf0-1).